The following is a 534-amino-acid chain: Inorganic phosphate transporter 1-4 (534 aa).

The Cytoplasmic segment spans residues 1–24; the sequence is MAREQLQVLNALDVAKTQWYHFTA. A helical membrane pass occupies residues 25-45; it reads IIIAGMGFFTDAYDLFCISLV. The Extracellular segment spans residues 46–70; the sequence is TKLLGRIYYHVEGAQKPGTLPPNVA. Residues 71 to 91 traverse the membrane as a helical segment; that stretch reads AAVNGVAFCGTLAGQLFFGWL. The Cytoplasmic segment spans residues 92-99; the sequence is GDKLGRKK. The helical transmembrane segment at 100–120 threads the bilayer; the sequence is VYGMTLMVMVLCSIASGLSFG. Topologically, residues 121 to 131 are extracellular; it reads HEPKAVMATLC. The helical transmembrane segment at 132–152 threads the bilayer; sequence FFRFWLGFGIGGDYPLSATIM. The Cytoplasmic segment spans residues 153–161; the sequence is SEYANKKTR. A helical transmembrane segment spans residues 162–182; that stretch reads GAFVSAVFAMQGFGIMAGGIF. Residues 183–211 lie on the Extracellular side of the membrane; it reads AIIISSAFEAKFPSPAYADDALGSTIPQA. The chain crosses the membrane as a helical span at residues 212–232; it reads DLVWRIILMAGAIPAAMTYYS. The Cytoplasmic segment spans residues 233–293; that stretch reads RSKMPETARY…GLFSKEFMSR (61 aa). Residues 294–314 traverse the membrane as a helical segment; sequence HGLHLLGTTSTWFLLDIAFYS. Over 315–349 the chain is Extracellular; sequence QNLFQKDIFSAIGWIPPAQSMNAIQEVFKIARAQT. The helical transmembrane segment at 350–370 threads the bilayer; sequence LIALCSTVPGYWFTVAFIDVI. Residues 371–372 are Cytoplasmic-facing; it reads GR. The chain crosses the membrane as a helical span at residues 373 to 393; that stretch reads FAIQMMGFFFMTVFMFALAIP. Residues 394–403 lie on the Extracellular side of the membrane; it reads YNHWTHKENR. A helical transmembrane segment spans residues 404 to 424; that stretch reads IGFVIMYSLTFFFANFGPNAT. Residues 425–442 are Cytoplasmic-facing; it reads TFVVPAEIFPARFRSTCH. A helical transmembrane segment spans residues 443–463; that stretch reads GISAASGKLGAMVGAFGFLYL. At 464–484 the chain is on the extracellular side; the sequence is AQNPDKDKTDAGYPPGIGVRN. The helical transmembrane segment at 485–505 threads the bilayer; that stretch reads SLIVLGVVNFLGILFTFLVPE. Over 506-534 the chain is Cytoplasmic; the sequence is SKGKSLEEMSGENEDNENSNNDSRTVPIV. A disordered region spans residues 512–534; it reads EEMSGENEDNENSNNDSRTVPIV. Serine 524 and serine 528 each carry phosphoserine.

This sequence belongs to the major facilitator superfamily. Phosphate:H(+) symporter (TC 2.A.1.9) family. Interacts with NLA. In terms of processing, ubiquitinated by NLA. Ubiquitination of PHT1-4 leads to its degradation by the proteasome. In terms of tissue distribution, mostly expressed in roots, in tissues connecting the lateral roots to the primary root. Also present in flowers, in senescing anther filaments and in the abscission zone at the base of siliques. Expressed in hydathodes and axillary buds, and in some senescing leaves. After Pi starvation, localized in all cells of undifferentiated root segments, including root tips and root hairs, and in the epidermis, cortex and stellar regions of mature root segments.

The protein localises to the cell membrane. High-affinity transporter for external inorganic phosphate. Acts as a H(+):phosphate symporter in both low- and high-Pi conditions. Confers sensitivity to arsenate. In Arabidopsis thaliana (Mouse-ear cress), this protein is Inorganic phosphate transporter 1-4 (PHT1-4).